Consider the following 240-residue polypeptide: B-cell receptor-associated protein 29 (240 aa).

The Lumenal portion of the chain corresponds to 1 to 6 (MTLQWT). The helical transmembrane segment at 7–27 (AVATFLYAEIGLILIFCLPFI) threads the bilayer. The Cytoplasmic segment spans residues 28–43 (PPQRWQKIFSFSVWGK). A helical membrane pass occupies residues 44 to 64 (IASFWNKAFLTIIILLIVLFL). Over 65-103 (DAVREVRKYSSTHTIEKSSASRPAAYEHTQMKLFRSQRN) the chain is Lumenal. Residues 104–124 (LYISGFSLFFWLVLRRLVTLI) form a helical membrane-spanning segment. Over 125–240 (TQLAKELSHK…DRAGKDKKCL (116 aa)) the chain is Cytoplasmic. A coiled-coil region spans residues 166 to 233 (GKEEEHILEA…REHSELQDRA (68 aa)). The short motif at 237-240 (KKCL) is the Di-lysine motif element.

This sequence belongs to the BCAP29/BCAP31 family. Homodimer and heterodimer with BCAP31. Binds CASP8 as a complex containing BCAP31, BCAP29, BCL2 and/or BCL2L1. Interacts with VAMP3, VAMP1 and membrane IgD immunoglobulins. May interact with ACTG1 and non-muscle myosin II.

The protein resides in the endoplasmic reticulum membrane. In terms of biological role, may play a role in anterograde transport of membrane proteins from the endoplasmic reticulum to the Golgi. May be involved in CASP8-mediated apoptosis. In Bos taurus (Bovine), this protein is B-cell receptor-associated protein 29 (BCAP29).